We begin with the raw amino-acid sequence, 131 residues long: Small ribosomal subunit protein uS8 (131 aa).

This sequence belongs to the universal ribosomal protein uS8 family. Part of the 30S ribosomal subunit. Contacts proteins S5 and S12.

One of the primary rRNA binding proteins, it binds directly to 16S rRNA central domain where it helps coordinate assembly of the platform of the 30S subunit. The sequence is that of Small ribosomal subunit protein uS8 from Ralstonia nicotianae (strain ATCC BAA-1114 / GMI1000) (Ralstonia solanacearum).